A 570-amino-acid polypeptide reads, in one-letter code: Small ribosomal subunit protein bS1 (570 aa).

6 consecutive S1 motif domains span residues 52–116 (GAIL…LSRE), 134–199 (GSIV…VSRR), 220–288 (GERR…LGLK), 305–375 (GKRV…LGLK), 392–462 (GLRV…LGVK), and 479–548 (GSDI…LSIK).

Belongs to the bacterial ribosomal protein bS1 family.

Binds mRNA; thus facilitating recognition of the initiation point. It is needed to translate mRNA with a short Shine-Dalgarno (SD) purine-rich sequence. The chain is Small ribosomal subunit protein bS1 (rpsA) from Chlamydia muridarum (strain MoPn / Nigg).